We begin with the raw amino-acid sequence, 642 residues long: uncharacterized protein (642 aa).

The Cytoplasmic portion of the chain corresponds to 1–15 (MVHITLGQAIWVSVK). A helical transmembrane segment spans residues 16–36 (PIIKIYLIIGVGFLMAKMGIL). At 37 to 42 (TVEATR) the chain is on the extracellular side. The helical transmembrane segment at 43–63 (IISDIVLTVLLPSLSFNKIVA) threads the bilayer. Over 64 to 73 (NIEDKDIKSV) the chain is Cytoplasmic. Residues 74-94 (GIICLSALLIFGSGFFFAYVV) form a helical membrane-spanning segment. At 95 to 104 (RLFLPVPKQW) the chain is on the extracellular side. A helical membrane pass occupies residues 105 to 125 (YGGILAGGMFPNISDLPIAYL). Over 126–142 (QSMDQGLVFSEEEGNKG) the chain is Cytoplasmic. The chain crosses the membrane as a helical span at residues 143–163 (VANVIIFLTMFLICIFNLGGF). At 164–460 (RLIESDFEYN…FLKNCLRPCS (297 aa)) the chain is on the extracellular side. Disordered regions lie at residues 183-206 (ETTK…RFFS) and 227-324 (GTKG…SQPR). Polar residues-rich tracts occupy residues 240–260 (RRST…NSKI) and 272–312 (IACT…SSID). Residues 461–481 (MAVIIALTVAFIPWVKALFVT) traverse the membrane as a helical segment. Over 482–499 (TANTPHISQAPDNAPPLS) the chain is Cytoplasmic. A helical transmembrane segment spans residues 500-520 (FFMDFTGYVGAACVPFGLILL). The Extracellular segment spans residues 521–538 (GATLGRLKIGNLYPGFWK). Residues 539-559 (AAVTLVILRQCVMPIFGVLWC) form a helical membrane-spanning segment. The Cytoplasmic portion of the chain corresponds to 560–574 (DRLVKAGWVNWQDDR). Residues 575–595 (MLLFVIAISWNLPTMTTLIYF) traverse the membrane as a helical segment. At 596–614 (TASFTPPETTAPIQMECVS) the chain is on the extracellular side. Residues 615–635 (FFLMLQYPLMVVSLPFLVSYF) traverse the membrane as a helical segment. At 636–642 (LKVQMNL) the chain is on the cytoplasmic side.

This sequence belongs to the auxin efflux carrier (TC 2.A.69) family.

It is found in the membrane. This is an uncharacterized protein from Saccharomyces cerevisiae (strain ATCC 204508 / S288c) (Baker's yeast).